Reading from the N-terminus, the 839-residue chain is Translation initiation factor IF-2 (839 aa).

2 stretches are compositionally biased toward basic and acidic residues: residues 1 to 12 (MSDNEIKNETPK) and 57 to 67 (AEAKAQEKQAA). Disordered regions lie at residues 1 to 21 (MSDN…RRTK) and 57 to 244 (AEAK…GASL). Positions 68–90 (EKAAQAQTEAKAQTEQACTTKKT) are enriched in low complexity. Composition is skewed to basic and acidic residues over residues 104 to 167 (PKTE…REET), 185 to 199 (READ…EGNR), and 212 to 233 (GGRE…DIKG). The tr-type G domain occupies 338–508 (TRAPVVTIMG…ILQSEVLELT (171 aa)). Residues 347–354 (GHVDHGKT) form a G1 region. Position 347-354 (347-354 (GHVDHGKT)) interacts with GTP. Residues 372–376 (GITQH) are G2. The G3 stretch occupies residues 394 to 397 (DTPG). GTP is bound by residues 394–398 (DTPGH) and 448–451 (NKID). Residues 448–451 (NKID) are G4. Residues 484–486 (SAK) are G5.

This sequence belongs to the TRAFAC class translation factor GTPase superfamily. Classic translation factor GTPase family. IF-2 subfamily.

The protein localises to the cytoplasm. Functionally, one of the essential components for the initiation of protein synthesis. Protects formylmethionyl-tRNA from spontaneous hydrolysis and promotes its binding to the 30S ribosomal subunits. Also involved in the hydrolysis of GTP during the formation of the 70S ribosomal complex. The chain is Translation initiation factor IF-2 from Haemophilus ducreyi (strain 35000HP / ATCC 700724).